The chain runs to 956 residues: F-box only protein 10 (956 aa).

An F-box domain is found at 1-48 (MEAGGLPLELWRMILAYLHLPDLGRCSLVCRAWYELILSLDSTRWRQL). PbH1 repeat units follow at residues 198 to 217 (SGHV…QVHG) and 238 to 260 (VPLC…TVEG). The segment at 314-367 (EGSQSPTSPASSSPKPGSKAGSQEAEVGSDGERVAQTPDSSDGGLSPSGEDEDE) is disordered. Composition is skewed to low complexity over residues 316–336 (SQSP…AGSQ) and 351–361 (PDSSDGGLSPS). 2 positions are modified to phosphoserine: Ser321 and Ser326. PbH1 repeat units follow at residues 427–448 (VQGC…FVCS), 449–470 (HGRA…RCIH), 471–493 (NSKI…FLRL), 494–516 (EGGG…DIRK), 538–560 (LGNG…GIYI), 561–583 (LYHG…GIAV), 584–606 (NENG…GVDI), 607–629 (RRGG…GVVV), 630–652 (GDEG…GVWM), 653–675 (MSSS…GVAV), 717–739 (RPIT…GLYV), 740–762 (QSSE…GITV), 764–786 (QSSQ…GVKV), 787–809 (EAQC…GIIT), and 832–854 (LPRS…GIAV).

As to quaternary structure, component of the SCF(FBXO10) complex consisting of CUL1, SKP1 and FBXO10. Interacts with BCL2. Interacts with PRDM1.

It is found in the cytoplasm. It participates in protein modification; protein ubiquitination. Functionally, substrate-recognition component of the SCF (SKP1-CUL1-F-box protein)-type E3 ubiquitin ligase complex. Mediates the ubiquitination and degradation of BCL2, an antiapoptotic protein, thereby playing a role in apoptosis by controlling the stability of BCL2. Targets also the receptor for advanced glycation end products RAGE for ubiquitination and subsequent lysosomal degradation. Directly controls HGAL/GCSAM ubiquitination and degradation and thereby decreases BCR signaling. This Homo sapiens (Human) protein is F-box only protein 10 (FBXO10).